Here is a 401-residue protein sequence, read N- to C-terminus: ADP-forming sulfoacetate-CoA ligase subunit SqwK (401 aa).

The ATP-grasp domain maps to 9-217; sequence KTVFSEHKIP…DNSVFRQPRF (209 aa). 35-96 contributes to the ATP binding site; that stretch reads KSVGFPSVVK…EEAVHIDKEI (62 aa). Mg(2+) contacts are provided by Glu185 and Asn187.

This sequence belongs to the succinate/malate CoA ligase beta subunit family. Forms a complex with SqwL. Mg(2+) serves as cofactor.

It carries out the reaction sulfoacetate + ATP + CoA = sulfoacetyl-CoA + ADP + phosphate. Functionally, part of a variant of the sulfo-TK pathway, a D-sulfoquinovose degradation pathway that produces sulfoacetate. Hydrolyzes sulfoacetyl-coenzyme A (sulfoacetyl-CoA) to produce sulfoacetate and CoA coupled with the phosphorylation of ADP to generate ATP. Cannot use succinate, acetate or 3-hydroxypropionate, and shows only residual activities with malonate and 3-sulfopropanoate. The protein is ADP-forming sulfoacetate-CoA ligase subunit SqwK of Acholeplasma sp.